The primary structure comprises 572 residues: Sulfate adenylyltransferase (572 aa).

The N-terminal stretch occupies residues 1–169 (MANTPHGGVL…IQAINKLNHY (169 aa)). Residues 170–394 (DYVGLRYTPA…LRESHPPRAK (225 aa)) are catalytic. A sulfate-binding site is contributed by Q197. ATP-binding positions include 197–200 (QTRN) and 291–294 (GRDH). Active-site residues include T198, R199, and N200. R199 serves as a coordination point for sulfate. A295 is a binding site for sulfate. M333 contacts ATP. Residues 395 to 572 (QGFTIFLTGH…LLESQGFFGN (178 aa)) form an allosteric regulation domain; adenylyl-sulfate kinase-like region. 3'-phosphoadenylyl sulfate contacts are provided by residues 434-437 (ETVR), R451, 477-478 (IA), and K515.

It in the N-terminal section; belongs to the sulfate adenylyltransferase family. In the C-terminal section; belongs to the APS kinase family. In terms of assembly, homohexamer. Dimer of trimers.

The protein resides in the cytoplasm. It catalyses the reaction sulfate + ATP + H(+) = adenosine 5'-phosphosulfate + diphosphate. Its pathway is sulfur metabolism; hydrogen sulfide biosynthesis; sulfite from sulfate: step 1/3. Its activity is regulated as follows. Allosterically inhibited by 3'-phosphoadenosine 5'-phosphosulfate (PAPS). Its function is as follows. Catalyzes the first intracellular reaction of sulfate assimilation, forming adenosine-5'-phosphosulfate (APS) from inorganic sulfate and ATP. Plays an important role in sulfate activation as a component of the biosynthesis pathway of sulfur-containing amino acids. In Yarrowia lipolytica (strain CLIB 122 / E 150) (Yeast), this protein is Sulfate adenylyltransferase.